The chain runs to 435 residues: Maltodextrin transport system permease protein MdxF (435 aa).

8 helical membrane-spanning segments follow: residues 35 to 55, 73 to 93, 136 to 156, 199 to 219, 234 to 254, 293 to 313, 337 to 357, and 403 to 423; these read LLFL…GIQA, FMLI…MFYI, AYIM…FVAL, VIWT…TALF, IFLF…SNMF, LIMI…TGVL, HITF…QYTF, and VAAA…LIAF. Residues 195 to 422 enclose the ABC transmembrane type-1 domain; sequence LGWTVIWTIC…FIVIGISLIA (228 aa).

This sequence belongs to the binding-protein-dependent transport system permease family. MalFG subfamily. As to quaternary structure, the complex is composed of two ATP-binding proteins (MsmX), two transmembrane proteins (MdxF and MdxG) and a solute-binding protein (MdxE).

Its subcellular location is the cell membrane. Part of the ABC transporter complex involved in maltodextrin import. Probably responsible for the translocation of the substrate across the membrane. This is Maltodextrin transport system permease protein MdxF (mdxF) from Bacillus subtilis (strain 168).